The sequence spans 1650 residues: MEAPGSGGGDGGGDPGGDGAHPDARGPVSGPCAAARDSERQLRLRLCVLNEILGTERDYVGTLRFLQSAFLQRIRQNVADSVEKGLTEENVKVLFSNIEDILEVHKDFLAALEYCLHPEPQSQHELGNVFLKFKDKFCVYEEYCSNHEKALRLLVELNKVPAVRAFLLSCMLLGGRKTTDIPLEGYLLSPIQRICKYPLLLKELAKRTPGKHPDHTAVQSALQAMKTVCSNINETKRQMEKLEALEQLQSHIEGWEGSNLTDICTELLLQGNLLKISAGNIQERAFFLFDNLLVYCKRKSRVTGSKKSTKRTKSINGSLYIFRGRINTEVMEVENVEDGTADYHSNGYTVTNGWKIHNTAKNKWFVCMAKTAEEKQKWLDALIREREQRESLKLGMERDAYVMIAEKGEKLYHMMMSKKVNLIKDRRRKLSTVPKCFLGNEFVAWLLEIGEISKTEEGVNLGQALLENGIIHHVSDKHQFKNEQVMYRFRYDDGTYKARSELEDIMSKGVRLYCRLHSLYAPVIKDRDYHLKTYKSVVPGSKLVDWLLAQGDCQTREEAVALGVGLCNNGFMHHVLEKSEFKDESQYFRFHADEEMEGTSSKNKQLRNDFKLVENILAKRLLIPPQEDDYGFDLEEKNKAVVVKSVQRGSLAEMAGLQAGRKIYSINEDLVFLRPFSEVETILNQFFCSRRPLRLLVATKAKETIKVPDHPEALSFQIRGTAPPCVFAVGRGSEAVAAGLCAGQCILKVNGTSVANDGALEVLEHFQAFRNHREEALGLYQWVYHSHEDAQLARASQGAPDEDPQEDDQPDSALPLLSLGPQLSLHEDSAVVSLTLDNVHLEHGVVYEYMSTAGAKCHVLEKIVEPRGCFRLAAKILEAFAVDDSIFVQNCGRLMAMSSAIVTMSHYEFHNICDTKLESIGQRIACYQEFAAQLKSRVSPPFKQASLEPHPLCGLDFCPTNCHVNLMEVSYPKTTPSVGRSFSIRFGRKPSLIGLDPEQGLNPMAYTQHCITTMAAPSWKCSPAVDEDSQGQGLNDSSYGSASGAPSQQDRGLSFLLKQEDREIQDAYLQLFTKLDVALKEMKQYVTQINRLLSTITEPTSAAPAPCDPSLVEETSSSPPVSEESEVDRTDHSGIKKVCFKVSEDEQEDSGHDTMSYRDSYSECNSNRDSVLSYTSVRSNSSYLGSDEMGSGDELPCDMRIPSDKQDKLHGCLEHLFNQVDSIHALLKGPVMSRAFEETRHFPMKHSWQEFKQKEECTVRGRNLIQISIQEDPWNLPSSIRTLVDNIQQYVEDGKNQLLLALLKCTDTELQLRRDAVFCQALVAAVCTFSEQLLAALDYRYNNNGEYEESSRDASRKWLEQVAATGVLLHWQSLLAPASVKEERTMLEDIWVTLSELDNVTFSFKQLDENSVANTNVFYHIEGSRQALKVVFYLDGFHFSRLPSRLEGGASLRLHTVLFTKALESVEGPPPPGNQAAEELQQEINAQSLEKVQQYYRKLRAFYLERSNLPTDAGATAVKIDQLIRPINALDELYRLMKTFVHPKAGAAGSLGAGLIPVSSELCYRLGACQITMCGTGMQRSTLSVSLEQAAILARSHGLLPKCVMQATDIMRKQGPRVEILAKNLRIKDPMPQGAPRLYQLCQPPVDGDL.

Over residues 1–19 (MEAPGSGGGDGGGDPGGDG) the composition is skewed to gly residues. Positions 1–33 (MEAPGSGGGDGGGDPGGDGAHPDARGPVSGPCA) are disordered. The region spanning 44-235 (LRLCVLNEIL…KTVCSNINET (192 aa)) is the DH domain. Residues 266–387 (ELLLQGNLLK…WLDALIRERE (122 aa)) enclose the PH domain. A Phosphoserine modification is found at serine 314. 2 DEP domains span residues 416 to 491 (MSKK…RFRY) and 518 to 592 (SLYA…RFHA). Positions 620 to 698 (RLLIPPQEDD…SRRPLRLLVA (79 aa)) constitute a PDZ domain. The tract at residues 793–813 (ARASQGAPDEDPQEDDQPDSA) is disordered. The span at 800-810 (PDEDPQEDDQP) shows a compositional bias: acidic residues. Serine 991 is modified (phosphoserine). Disordered stretches follow at residues 1022 to 1047 (SPAVDEDSQGQGLNDSSYGSASGAPS) and 1099 to 1129 (PTSAAPAPCDPSLVEETSSSPPVSEESEVDR). Residues 1030 to 1047 (QGQGLNDSSYGSASGAPS) are compositionally biased toward polar residues. Positions 1109–1122 (PSLVEETSSSPPVS) are enriched in low complexity. 2 positions are modified to phosphoserine: serine 1186 and serine 1191.

As to quaternary structure, interacts preferentially with RAC2. Interacts with RAC1. Interacts with AUTS2.

The protein resides in the cytoplasm. The protein localises to the cytosol. It localises to the cell membrane. Its function is as follows. Functions as a RAC guanine nucleotide exchange factor (GEF), which activates the Rac proteins by exchanging bound GDP for free GTP. Its activity is synergistically activated by phosphatidylinositol 3,4,5-trisphosphate and the beta gamma subunits of heterotrimeric G protein. May function downstream of heterotrimeric G proteins in neutrophils. The chain is Phosphatidylinositol 3,4,5-trisphosphate-dependent Rac exchanger 1 protein (Prex1) from Mus musculus (Mouse).